Reading from the N-terminus, the 476-residue chain is Aspartyl/glutamyl-tRNA(Asn/Gln) amidotransferase subunit B (476 aa).

It belongs to the GatB/GatE family. GatB subfamily. Heterotrimer of A, B and C subunits.

It carries out the reaction L-glutamyl-tRNA(Gln) + L-glutamine + ATP + H2O = L-glutaminyl-tRNA(Gln) + L-glutamate + ADP + phosphate + H(+). It catalyses the reaction L-aspartyl-tRNA(Asn) + L-glutamine + ATP + H2O = L-asparaginyl-tRNA(Asn) + L-glutamate + ADP + phosphate + 2 H(+). In terms of biological role, allows the formation of correctly charged Asn-tRNA(Asn) or Gln-tRNA(Gln) through the transamidation of misacylated Asp-tRNA(Asn) or Glu-tRNA(Gln) in organisms which lack either or both of asparaginyl-tRNA or glutaminyl-tRNA synthetases. The reaction takes place in the presence of glutamine and ATP through an activated phospho-Asp-tRNA(Asn) or phospho-Glu-tRNA(Gln). The protein is Aspartyl/glutamyl-tRNA(Asn/Gln) amidotransferase subunit B of Clostridium botulinum (strain Okra / Type B1).